Consider the following 344-residue polypeptide: uncharacterized protein (344 aa).

A signal peptide spans 1 to 19; it reads MRIIFYLTLLLFIFNKVKS. Residues 323 to 344 constitute a propeptide, removed in mature form; sequence SATRNQISIMVLILSVLLVLIL.

The protein localises to the cell membrane. This is an uncharacterized protein from Dictyostelium discoideum (Social amoeba).